Reading from the N-terminus, the 631-residue chain is MGNGITKNPCFSGDPYAAAVASDPLPDDSHGHSFTYVPSSAAAFDHSPRSAAASSETSYFSLSGAAISANPATSASMPSFRLYNELTWPPSTACTFESSRSFAAAPLIQAAPPRLSMSGPLHATSGRFSEASGSASTASDRFSDHPFMDGMLDRASSASSTARLMPSFSHLMSEPRVAQSGLSNERSLIRSLVRVASKLRFGVPLSGRRSNGPAEPTTKSDGDYRSTPKGNVEWAQGMAGEDRFHVAVSEEHGWVFVGIYDGFNGPDATDYLFANLYVAVHRELKGVLWDDIQGVDVVTDNLPDPALANATHLCFLDAGGVGGGGDDDPDAERKAKRGRIERNADDDGASSVHRDVLKALARALARTEEAFFAAAEERAAQSPELGLVGSCVLVMLMKGKDVYLMNVGDSRAVLARRREPDFKDIFFRPDQDLQLLKAEVMRELEAHDRNGLQCVQLTPEHSAAAEEEVRRIRSQHLTDRQAVVNGRVKGKLSVTRAFGAGYLKQPKWNDRLLEAFKVDYIGAEPYISCTPSLRHHRISSNDRFLVLSSDGLYQYFTNKEVVDQVAMFTAEQPDGDPAKHLVGELVLRAARKAGMDCRRLLEIPHGDRRNYHDDVSIIVMSFEGRIWRSSV.

Disordered stretches follow at residues 119–142 (GPLHATSGRFSEASGSASTASDRF) and 205–231 (LSGRRSNGPAEPTTKSDGDYRSTPKGN). Polar residues predominate over residues 131 to 140 (ASGSASTASD). One can recognise a PPM-type phosphatase domain in the interval 221 to 622 (DGDYRSTPKG…DDVSIIVMSF (402 aa)). Residues aspartate 261 and glycine 262 each coordinate Mn(2+). The interval 324 to 347 (GGDDDPDAERKAKRGRIERNADDD) is disordered. 2 residues coordinate Mn(2+): aspartate 550 and aspartate 613.

The protein belongs to the PP2C family. Requires Mg(2+) as cofactor. Mn(2+) is required as a cofactor.

It carries out the reaction O-phospho-L-seryl-[protein] + H2O = L-seryl-[protein] + phosphate. The catalysed reaction is O-phospho-L-threonyl-[protein] + H2O = L-threonyl-[protein] + phosphate. This is Probable protein phosphatase 2C 31 from Oryza sativa subsp. japonica (Rice).